Here is a 587-residue protein sequence, read N- to C-terminus: Proline-rich protein 14 (587 aa).

An N-acetylmethionine modification is found at Met-1. Residues 1–11 (MDLPGDSSTPG) are compositionally biased toward polar residues. Disordered regions lie at residues 1–48 (MDLP…EKAS), 65–152 (VPLE…HQPT), and 181–241 (ARRA…RPRL). A sufficient for heterochromatin association in interphase and chromatin association in anaphase region spans residues 1-135 (MDLPGDSSTP…TPRRQSRTTP (135 aa)). Residues 85 to 378 (SVRSQPPASP…MAKAPPPPRP (294 aa)) are required for the interaction with GRB2 and sufficient to promote the phosphorylation of AKT and cell proliferation. Residues 136-365 (GPDEGPSQKV…RPRPRRHTVG (230 aa)) form a required for nuclear lamina association region. Positions 200 to 214 (LPAPSRPSALSANPL) are enriched in low complexity. Positions 215 to 234 (ASPPPAPDPVLEPPSTPPPS) are enriched in pro residues. The residue at position 277 (Ser-277) is a Phosphoserine. Disordered regions lie at residues 290–444 (EAGQ…IGKV) and 524–587 (FRDS…PHRT). Over residues 314-325 (AQDQNPSATLTK) the composition is skewed to polar residues. Residues 337 to 356 (LGPPGPDPCSWPPVPAPSSR) are compositionally biased toward pro residues. The segment covering 398–410 (TSCSSTASTSSFS) has biased composition (low complexity). A required for nuclear localization region spans residues 519–536 (RRTVEFRDSSLPRSRRPS). Over residues 538 to 548 (GARATAGRTLP) the composition is skewed to low complexity. Residues 572–581 (LLEEEEEGDQ) show a composition bias toward acidic residues.

In terms of assembly, interacts (via proline-rich region) with GRB2 (via SH3 domain 2). Interacts (via N-terminus) with CBX5.

The protein localises to the chromosome. It localises to the nucleus. The protein resides in the nucleus lamina. It is found in the nucleoplasm. In terms of biological role, functions in tethering peripheral heterochromatin to the nuclear lamina during interphase, possibly through the interaction with heterochromatin protein CBX5/HP1 alpha. Might play a role in reattaching heterochromatin to the nuclear lamina at mitotic exit. Promotes myoblast differentiation during skeletal myogenesis, possibly by stimulating transcription factor MyoD activity via binding to CBX5/HP1 alpha. Involved in the positive regulation of the PI3K-Akt-mTOR signaling pathway and in promoting cell proliferation, possibly via binding to GRB2. The polypeptide is Proline-rich protein 14 (PRR14) (Bos taurus (Bovine)).